A 102-amino-acid chain; its full sequence is Small ribosomal subunit protein uS10 (102 aa).

It belongs to the universal ribosomal protein uS10 family. Part of the 30S ribosomal subunit.

Functionally, involved in the binding of tRNA to the ribosomes. This chain is Small ribosomal subunit protein uS10, found in Planobispora rosea.